A 319-amino-acid chain; its full sequence is NH(3)-dependent NAD(+) synthetase (319 aa).

33–40 is an ATP binding site; that stretch reads GLSGGIDS. Residue Asp39 coordinates Mg(2+). Arg169 is a deamido-NAD(+) binding site. Thr189 is a binding site for ATP. Glu194 serves as a coordination point for Mg(2+). Deamido-NAD(+) is bound by residues Lys202 and Asp209. ATP contacts are provided by Lys218 and Thr240.

It belongs to the NAD synthetase family. As to quaternary structure, homodimer.

It catalyses the reaction deamido-NAD(+) + NH4(+) + ATP = AMP + diphosphate + NAD(+) + H(+). Its pathway is cofactor biosynthesis; NAD(+) biosynthesis; NAD(+) from deamido-NAD(+) (ammonia route): step 1/1. Catalyzes the ATP-dependent amidation of deamido-NAD to form NAD. Uses ammonia as a nitrogen source. The sequence is that of NH(3)-dependent NAD(+) synthetase from Mesorhizobium japonicum (strain LMG 29417 / CECT 9101 / MAFF 303099) (Mesorhizobium loti (strain MAFF 303099)).